A 522-amino-acid chain; its full sequence is 2-isopropylmalate synthase (522 aa).

A Pyruvate carboxyltransferase domain is found at V5–H267. Mn(2+) is bound by residues D14, H202, H204, and N238. The segment at V392–V522 is regulatory domain.

Belongs to the alpha-IPM synthase/homocitrate synthase family. LeuA type 1 subfamily. As to quaternary structure, homodimer. Mn(2+) serves as cofactor.

It is found in the cytoplasm. The enzyme catalyses 3-methyl-2-oxobutanoate + acetyl-CoA + H2O = (2S)-2-isopropylmalate + CoA + H(+). It functions in the pathway amino-acid biosynthesis; L-leucine biosynthesis; L-leucine from 3-methyl-2-oxobutanoate: step 1/4. Catalyzes the condensation of the acetyl group of acetyl-CoA with 3-methyl-2-oxobutanoate (2-ketoisovalerate) to form 3-carboxy-3-hydroxy-4-methylpentanoate (2-isopropylmalate). The polypeptide is 2-isopropylmalate synthase (Shewanella amazonensis (strain ATCC BAA-1098 / SB2B)).